We begin with the raw amino-acid sequence, 319 residues long: Large ribosomal subunit protein uL10 (319 aa).

Positions 286-295 (ADSGAAAPSA) are enriched in low complexity. The disordered stretch occupies residues 286–319 (ADSGAAAPSAAKEEEKKEEPEEESDGDLGMSLFD).

This sequence belongs to the universal ribosomal protein uL10 family. In terms of assembly, P0 forms a pentameric complex by interaction with dimers of P1 and P2. Interacts with NSF. Post-translationally, phosphorylated. As to expression, highly expressed in stems, inflorescences and immature seeds (at protein level). Expressed in leaves and mature seeds (at protein level).

Functionally, ribosomal protein P0 is the functional equivalent of E.coli protein L10. The protein is Large ribosomal subunit protein uL10 of Oryza sativa subsp. japonica (Rice).